We begin with the raw amino-acid sequence, 342 residues long: tRNA-specific 2-thiouridylase MnmA 2 (342 aa).

Residue Cys-62 is the Nucleophile of the active site. An intrachain disulfide couples Cys-62 to Cys-160. Residue Gly-86 coordinates ATP. The interval 110–112 (KDQ) is interaction with tRNA. Cys-160 serves as the catalytic Cysteine persulfide intermediate. The tract at residues 268 to 269 (RY) is interaction with tRNA.

It belongs to the MnmA/TRMU family.

It localises to the cytoplasm. The enzyme catalyses S-sulfanyl-L-cysteinyl-[protein] + uridine(34) in tRNA + AH2 + ATP = 2-thiouridine(34) in tRNA + L-cysteinyl-[protein] + A + AMP + diphosphate + H(+). Catalyzes the 2-thiolation of uridine at the wobble position (U34) of tRNA, leading to the formation of s(2)U34. This is tRNA-specific 2-thiouridylase MnmA 2 from Syntrophus aciditrophicus (strain SB).